The primary structure comprises 353 residues: Putative actin-28 (353 aa).

It belongs to the actin family.

It localises to the cytoplasm. The protein resides in the cytoskeleton. It catalyses the reaction ATP + H2O = ADP + phosphate + H(+). Actins are highly conserved proteins that are involved in various types of cell motility and are ubiquitously expressed in all eukaryotic cells. Multiple isoforms are involved in various cellular functions such as cytoskeleton structure, cell mobility, chromosome movement and muscle contraction. The protein is Putative actin-28 (act28) of Dictyostelium discoideum (Social amoeba).